A 172-amino-acid polypeptide reads, in one-letter code: Large ribosomal subunit protein uL10 (172 aa).

Belongs to the universal ribosomal protein uL10 family. As to quaternary structure, part of the ribosomal stalk of the 50S ribosomal subunit. The N-terminus interacts with L11 and the large rRNA to form the base of the stalk. The C-terminus forms an elongated spine to which L12 dimers bind in a sequential fashion forming a multimeric L10(L12)X complex.

Functionally, forms part of the ribosomal stalk, playing a central role in the interaction of the ribosome with GTP-bound translation factors. This Bradyrhizobium sp. (strain ORS 278) protein is Large ribosomal subunit protein uL10.